The chain runs to 236 residues: tRNA1(Val) (adenine(37)-N6)-methyltransferase (236 aa).

This sequence belongs to the methyltransferase superfamily. tRNA (adenine-N(6)-)-methyltransferase family.

Its subcellular location is the cytoplasm. It carries out the reaction adenosine(37) in tRNA1(Val) + S-adenosyl-L-methionine = N(6)-methyladenosine(37) in tRNA1(Val) + S-adenosyl-L-homocysteine + H(+). In terms of biological role, specifically methylates the adenine in position 37 of tRNA(1)(Val) (anticodon cmo5UAC). The protein is tRNA1(Val) (adenine(37)-N6)-methyltransferase of Actinobacillus pleuropneumoniae serotype 7 (strain AP76).